The following is a 448-amino-acid chain: Maltoporin (448 aa).

The N-terminal stretch at M1–A25 is a signal peptide.

The protein belongs to the porin LamB (TC 1.B.3) family. In terms of assembly, homotrimer formed of three 18-stranded antiparallel beta-barrels, containing three independent channels.

Its subcellular location is the cell outer membrane. It carries out the reaction beta-maltose(in) = beta-maltose(out). Involved in the transport of maltose and maltodextrins. This chain is Maltoporin, found in Cronobacter sakazakii (strain ATCC BAA-894) (Enterobacter sakazakii).